The following is a 513-amino-acid chain: 2-isopropylmalate synthase (513 aa).

The region spanning 5–268 is the Pyruvate carboxyltransferase domain; the sequence is LIIFDTTLRD…DVGVDTSQIV (264 aa). The Mn(2+) site is built by aspartate 14, histidine 202, histidine 204, and asparagine 239. Residues 394–513 are regulatory domain; that stretch reads RFISLSQRSE…KAVQKINPQI (120 aa).

It belongs to the alpha-IPM synthase/homocitrate synthase family. LeuA type 1 subfamily. Homodimer. It depends on Mn(2+) as a cofactor.

The protein resides in the cytoplasm. The enzyme catalyses 3-methyl-2-oxobutanoate + acetyl-CoA + H2O = (2S)-2-isopropylmalate + CoA + H(+). The protein operates within amino-acid biosynthesis; L-leucine biosynthesis; L-leucine from 3-methyl-2-oxobutanoate: step 1/4. Functionally, catalyzes the condensation of the acetyl group of acetyl-CoA with 3-methyl-2-oxobutanoate (2-ketoisovalerate) to form 3-carboxy-3-hydroxy-4-methylpentanoate (2-isopropylmalate). The chain is 2-isopropylmalate synthase from Cupriavidus pinatubonensis (strain JMP 134 / LMG 1197) (Cupriavidus necator (strain JMP 134)).